A 94-amino-acid chain; its full sequence is MINHFSVLGIKPSAKEDDIKKAYRRLSNKYHPDKLLGASDEEKEQASQQLERVKKAYEVLSDPKLRNAFIRDFNNVIVTDPNSAMRELWDQFYP.

A J domain is found at 3–93; the sequence is NHFSVLGIKP…AMRELWDQFY (91 aa). Residues 74–94 form an essential for interaction with AtcC region; the sequence is NNVIVTDPNSAMRELWDQFYP.

As to quaternary structure, interacts via its C-terminal extension with AtcC. Does not interact with AtcA and AtcB.

Involved in cold adaptation. The J-domain is functional and can stimulate the ATPase activity of the DnaK chaperone. May work as a co-chaperone of the DnaK system to support cold resistance. This chain is Adaptation to cold protein J, found in Shewanella oneidensis (strain ATCC 700550 / JCM 31522 / CIP 106686 / LMG 19005 / NCIMB 14063 / MR-1).